The sequence spans 285 residues: Eukaryotic translation initiation factor 3 subunit F-2 (285 aa).

Positions 11–145 (VLIKPLVLFQ…TRLYCAVEIG (135 aa)) constitute an MPN domain.

It belongs to the eIF-3 subunit F family. As to quaternary structure, component of the eukaryotic translation initiation factor 3 (eIF-3) complex. The eIF-3 complex interacts with pix.

It localises to the cytoplasm. Component of the eukaryotic translation initiation factor 3 (eIF-3) complex, which is involved in protein synthesis of a specialized repertoire of mRNAs and, together with other initiation factors, stimulates binding of mRNA and methionyl-tRNAi to the 40S ribosome. The eIF-3 complex specifically targets and initiates translation of a subset of mRNAs involved in cell proliferation. This chain is Eukaryotic translation initiation factor 3 subunit F-2, found in Drosophila erecta (Fruit fly).